Reading from the N-terminus, the 261-residue chain is Cytochrome c oxidase subunit 3 (261 aa).

Residues 1–15 (MTHQTHAYHMVNPSP) lie on the Mitochondrial matrix side of the membrane. The chain crosses the membrane as a helical span at residues 16–34 (WPLTGALSALLMTSGLIMW). The Mitochondrial intermembrane portion of the chain corresponds to 35-40 (FHFNSV). Residues 41-66 (ALLMLGLTTNMLTMYQWWRDVIREST) traverse the membrane as a helical segment. Residues 67-72 (FQGHHT) are Mitochondrial matrix-facing. A helical transmembrane segment spans residues 73–105 (PNVQKGLRYGMILFIISEVLFFTGFFWAFYHSS). Topologically, residues 106–128 (LAPTPELGGCWPPTGIHPLNPLE) are mitochondrial intermembrane. The chain crosses the membrane as a helical span at residues 129–152 (VPLLNTSVLLASGVSITWAHHSLM). Topologically, residues 153 to 155 (EGN) are mitochondrial matrix. Residues 156-183 (RNHMLQALFITIALGVYFTLLQASEYYE) form a helical membrane-spanning segment. The Mitochondrial intermembrane segment spans residues 184 to 190 (APFTISD). Residues 191–223 (GVYGSTFFVATGFHGLHVIIGSTFLIVCFFRQL) form a helical membrane-spanning segment. Residues 224–232 (KFHFTSSHH) are Mitochondrial matrix-facing. A helical membrane pass occupies residues 233 to 256 (FGFEAAAWYWHFVDVVWLFLYVSI). Topologically, residues 257 to 261 (YWWGS) are mitochondrial intermembrane.

It belongs to the cytochrome c oxidase subunit 3 family. As to quaternary structure, component of the cytochrome c oxidase (complex IV, CIV), a multisubunit enzyme composed of 14 subunits. The complex is composed of a catalytic core of 3 subunits MT-CO1, MT-CO2 and MT-CO3, encoded in the mitochondrial DNA, and 11 supernumerary subunits COX4I, COX5A, COX5B, COX6A, COX6B, COX6C, COX7A, COX7B, COX7C, COX8 and NDUFA4, which are encoded in the nuclear genome. The complex exists as a monomer or a dimer and forms supercomplexes (SCs) in the inner mitochondrial membrane with NADH-ubiquinone oxidoreductase (complex I, CI) and ubiquinol-cytochrome c oxidoreductase (cytochrome b-c1 complex, complex III, CIII), resulting in different assemblies (supercomplex SCI(1)III(2)IV(1) and megacomplex MCI(2)III(2)IV(2)).

It localises to the mitochondrion inner membrane. It catalyses the reaction 4 Fe(II)-[cytochrome c] + O2 + 8 H(+)(in) = 4 Fe(III)-[cytochrome c] + 2 H2O + 4 H(+)(out). In terms of biological role, component of the cytochrome c oxidase, the last enzyme in the mitochondrial electron transport chain which drives oxidative phosphorylation. The respiratory chain contains 3 multisubunit complexes succinate dehydrogenase (complex II, CII), ubiquinol-cytochrome c oxidoreductase (cytochrome b-c1 complex, complex III, CIII) and cytochrome c oxidase (complex IV, CIV), that cooperate to transfer electrons derived from NADH and succinate to molecular oxygen, creating an electrochemical gradient over the inner membrane that drives transmembrane transport and the ATP synthase. Cytochrome c oxidase is the component of the respiratory chain that catalyzes the reduction of oxygen to water. Electrons originating from reduced cytochrome c in the intermembrane space (IMS) are transferred via the dinuclear copper A center (CU(A)) of subunit 2 and heme A of subunit 1 to the active site in subunit 1, a binuclear center (BNC) formed by heme A3 and copper B (CU(B)). The BNC reduces molecular oxygen to 2 water molecules using 4 electrons from cytochrome c in the IMS and 4 protons from the mitochondrial matrix. The sequence is that of Cytochrome c oxidase subunit 3 (MT-CO3) from Nanger granti (Grant's gazelle).